Here is a 159-residue protein sequence, read N- to C-terminus: Secreted RxLR effector protein 50 (159 aa).

An N-terminal signal peptide occupies residues Met-1 to Gly-19. A RxLR-dEER motif is present at residues Arg-38 to Arg-54.

The protein belongs to the RxLR effector family.

The protein localises to the secreted. It is found in the host nucleus. It localises to the host cytoplasm. Functionally, secreted effector that completely suppresses the host cell death induced by cell death-inducing proteins. This is Secreted RxLR effector protein 50 from Plasmopara viticola (Downy mildew of grapevine).